The primary structure comprises 498 residues: Fascin-3 (498 aa).

Belongs to the fascin family. Expressed in testis.

The protein resides in the cytoplasm. It localises to the cytoskeleton. In terms of biological role, acts as an actin bundling protein. This chain is Fascin-3 (FSCN3), found in Homo sapiens (Human).